The following is a 316-amino-acid chain: Annexin D7 (316 aa).

At Ala2 the chain carries N-acetylalanine. Annexin repeat units follow at residues Pro11–Phe82, Glu83–Ser154, Thr166–Lys237, and Tyr241–Gly312. The Ca(2+) site is built by Phe24, Gly26, Gly28, and Glu68. Residue Ser95 is modified to Phosphoserine. Phosphothreonine is present on residues Thr100 and Thr112. The residue at position 129 (Tyr129) is a Phosphotyrosine. Residues Ile254 and Gly258 each contribute to the Ca(2+) site. Residue Tyr283 is modified to Phosphotyrosine. The residue at position 288 (Ser288) is a Phosphoserine. 3 residues coordinate Ca(2+): Asp298, Thr299, and Glu304.

This sequence belongs to the annexin (TC 1.A.31.1) family. As to expression, expressed in flowers.

This chain is Annexin D7 (ANNAT7), found in Arabidopsis thaliana (Mouse-ear cress).